Reading from the N-terminus, the 81-residue chain is MTKKIGIEQSLSDVEQALKQKGYDVVMMKTPEDAKNCDCCVVTGLDSNVQGIADTSTQAPVITASGMTADEICSEVEKKFH.

The protein belongs to the UPF0180 family.

This chain is UPF0180 protein RBAM_013970, found in Bacillus velezensis (strain DSM 23117 / BGSC 10A6 / LMG 26770 / FZB42) (Bacillus amyloliquefaciens subsp. plantarum).